The primary structure comprises 422 residues: Probable isoprenylcysteine alpha-carbonyl methylesterase ICMEL2 (422 aa).

Positions 1-16 (MQLSPERCRPMSENRE) are enriched in basic and acidic residues. The tract at residues 1-55 (MQLSPERCRPMSENREAWSANSEEMELLHGSNRLSSPEHVRRRVSGNSSEDGSPR) is disordered. The next 2 helical transmembrane spans lie at 97 to 117 (LLALACYAMLLMPGFLQVAYL) and 152 to 172 (VVVFVTGGAWIIGYKAWGSLL). Substrate contacts are provided by residues 158 to 160 (GGA) and 229 to 231 (QSA). Catalysis depends on residues S230, D331, and H363.

It belongs to the AB hydrolase superfamily. Isoprenylcysteine methylesterase family. In terms of tissue distribution, expressed at low levels in flowers and siliques.

It localises to the endoplasmic reticulum membrane. It is found in the golgi apparatus membrane. It carries out the reaction [protein]-C-terminal S-[(2E,6E)-farnesyl]-L-cysteine methyl ester + H2O = [protein]-C-terminal S-[(2E,6E)-farnesyl]-L-cysteine + methanol + H(+). Its function is as follows. Catalyzes the demethylation of isoprenylcysteine methylesters. May act as a negative regulator of ABA signaling. The sequence is that of Probable isoprenylcysteine alpha-carbonyl methylesterase ICMEL2 from Arabidopsis thaliana (Mouse-ear cress).